Reading from the N-terminus, the 275-residue chain is COP9 signalosome complex subunit 7a (275 aa).

At serine 2 the chain carries N-acetylserine. One can recognise a PCI domain in the interval 2–159; that stretch reads SAEVKVTGQN…QRLEVDYSIG (158 aa). Positions 185–233 form a coiled coil; it reads LSGIEEQVSRANQHKEQQLGLKQQIESEVANLKKTIKVTTAAAAAATSQ. The disordered stretch occupies residues 228-275; sequence AAATSQDPEQHLTELREPASGTNQRQPSKKASKGKGLRGSAKIWSKSN. A compositionally biased stretch (basic and acidic residues) spans 235–244; it reads PEQHLTELRE. The span at 254 to 263 shows a compositional bias: basic residues; it reads PSKKASKGKG.

It belongs to the CSN7/EIF3M family. CSN7 subfamily. As to quaternary structure, component of the CSN complex, composed of COPS1/GPS1, COPS2, COPS3, COPS4, COPS5, COPS6, COPS7 (COPS7A or COPS7B), COPS8 and COPS9. In the complex, it probably interacts directly with COPS1, COPS2, COPS4, COPS5, COPS6 and COPS8. Interacts with PMF1. Interacts with the translation initiation factor EIF3S6. Interacts with CK2 and PKD. Interacts directly with ID3. In terms of processing, phosphorylated by CK2 and PKD kinases.

It is found in the cytoplasm. The protein resides in the nucleus. Component of the COP9 signalosome complex (CSN), a complex involved in various cellular and developmental processes. The CSN complex is an essential regulator of the ubiquitin (Ubl) conjugation pathway by mediating the deneddylation of the cullin subunits of SCF-type E3 ligase complexes, leading to decrease the Ubl ligase activity of SCF-type complexes such as SCF, CSA or DDB2. The complex is also involved in phosphorylation of p53/TP53, JUN, I-kappa-B-alpha/NFKBIA, ITPK1 and IRF8/ICSBP, possibly via its association with CK2 and PKD kinases. CSN-dependent phosphorylation of TP53 and JUN promotes and protects degradation by the Ubl system, respectively. The chain is COP9 signalosome complex subunit 7a (Cops7a) from Mus musculus (Mouse).